We begin with the raw amino-acid sequence, 121 residues long: MIKLRLKRFGKKKEASFRIVACNSTSRRDGRPLQELGFYNPRTKETRLDTEALRTRLTQGAQPTDVVRTLLEKGGLLEKIERPSIAIGKAKLEKEKKAKAKTKEEENEGSKTESGSNEAES.

The disordered stretch occupies residues 88–121; sequence GKAKLEKEKKAKAKTKEEENEGSKTESGSNEAES. Over residues 90–111 the composition is skewed to basic and acidic residues; it reads AKLEKEKKAKAKTKEEENEGSK. Over residues 112–121 the composition is skewed to polar residues; the sequence is TESGSNEAES.

Belongs to the bacterial ribosomal protein bS16 family.

The chain is Small ribosomal subunit protein bS16 from Prochlorococcus marinus (strain MIT 9215).